Reading from the N-terminus, the 349-residue chain is Probable trehalose-phosphate phosphatase H (349 aa).

This sequence belongs to the trehalose phosphatase family. It depends on a divalent metal cation as a cofactor.

The enzyme catalyses alpha,alpha-trehalose 6-phosphate + H2O = alpha,alpha-trehalose + phosphate. Its pathway is glycan biosynthesis; trehalose biosynthesis. Removes the phosphate from trehalose 6-phosphate to produce free trehalose. Trehalose accumulation in plant may improve abiotic stress tolerance. This chain is Probable trehalose-phosphate phosphatase H (TPPH), found in Arabidopsis thaliana (Mouse-ear cress).